Consider the following 150-residue polypeptide: Deoxyuridine 5'-triphosphate nucleotidohydrolase (150 aa).

Residues 65 to 67 (RSG), Asn78, and 82 to 84 (TID) contribute to the substrate site. A disordered region spans residues 130-150 (LSDTERGEGGFGHTGVASKAE).

The protein belongs to the dUTPase family. It depends on Mg(2+) as a cofactor.

The catalysed reaction is dUTP + H2O = dUMP + diphosphate + H(+). Its pathway is pyrimidine metabolism; dUMP biosynthesis; dUMP from dCTP (dUTP route): step 2/2. Functionally, this enzyme is involved in nucleotide metabolism: it produces dUMP, the immediate precursor of thymidine nucleotides and it decreases the intracellular concentration of dUTP so that uracil cannot be incorporated into DNA. The polypeptide is Deoxyuridine 5'-triphosphate nucleotidohydrolase (Chlorobaculum parvum (strain DSM 263 / NCIMB 8327) (Chlorobium vibrioforme subsp. thiosulfatophilum)).